Here is a 168-residue protein sequence, read N- to C-terminus: Coiled-coil domain-containing protein 200 (168 aa).

Residues 16-50 adopt a coiled-coil conformation; sequence LDRRRWLMAQQQQELQQKEQELKNHQEEEQQSEEK. Positions 23-168 are disordered; it reads MAQQQQELQQ…LKSTNYIQQW (146 aa). Positions 31-52 are enriched in basic and acidic residues; that stretch reads QQKEQELKNHQEEEQQSEEKLQ. The span at 70-82 shows a compositional bias: low complexity; the sequence is SQEQPQPSQQQPS. 2 stretches are compositionally biased toward pro residues: residues 83–94 and 104–117; these read VQPPSQPPPQPS and GPQPPQPQPPPQPT. Composition is skewed to polar residues over residues 124–138 and 145–168; these read RCTQHTSKCNLQDSQ and PCQSSPIRNTGYSQLKSTNYIQQW.

The polypeptide is Coiled-coil domain-containing protein 200 (Homo sapiens (Human)).